The sequence spans 179 residues: Large ribosomal subunit protein uL6 (179 aa).

This sequence belongs to the universal ribosomal protein uL6 family. Part of the 50S ribosomal subunit.

In terms of biological role, this protein binds to the 23S rRNA, and is important in its secondary structure. It is located near the subunit interface in the base of the L7/L12 stalk, and near the tRNA binding site of the peptidyltransferase center. The sequence is that of Large ribosomal subunit protein uL6 from Mycobacterium ulcerans (strain Agy99).